A 182-amino-acid chain; its full sequence is Ribosome-recycling factor (182 aa).

The protein belongs to the RRF family.

The protein localises to the cytoplasm. Its function is as follows. Responsible for the release of ribosomes from messenger RNA at the termination of protein biosynthesis. May increase the efficiency of translation by recycling ribosomes from one round of translation to another. The protein is Ribosome-recycling factor of Hydrogenobaculum sp. (strain Y04AAS1).